A 67-amino-acid chain; its full sequence is Ranatuerin-2Vb (67 aa).

Residues 1–22 (MFTLKKSFLLLFFLGTITLSLC) form the signal peptide. A propeptide spanning residues 23-39 (EEERGADDDDGEEEVKR) is cleaved from the precursor. Cysteines 62 and 67 form a disulfide.

As to expression, expressed by the skin glands.

The protein resides in the secreted. Its function is as follows. Antimicrobial peptide. This chain is Ranatuerin-2Vb, found in Odorrana versabilis (Chinese bamboo leaf odorous frog).